The chain runs to 70 residues: uncharacterized protein (70 aa).

This is an uncharacterized protein from Torque teno tamarin virus (isolate So-TTV2).